We begin with the raw amino-acid sequence, 217 residues long: MSNLKLDVHTADGKTNGTVELPASIFDAEASVALMHQVVTAQLAAKRQGTHATKTRGMVSGGGRKPFRQKGTGRARQGSIRAPHFTGGGTVHGPQPRDYSQRTPKKMKAAALRGALTDRVRHDRIHVVEELVPGQTPSTKAARAFIERLTDRKSVLVVLTREDVTAWKSVNNLPQVHTLVNDQLNTYDVLNADDVVFSVEALNAFINAADKTKEEAK.

Residues 46–103 are disordered; the sequence is KRQGTHATKTRGMVSGGGRKPFRQKGTGRARQGSIRAPHFTGGGTVHGPQPRDYSQRT.

It belongs to the universal ribosomal protein uL4 family. In terms of assembly, part of the 50S ribosomal subunit.

In terms of biological role, one of the primary rRNA binding proteins, this protein initially binds near the 5'-end of the 23S rRNA. It is important during the early stages of 50S assembly. It makes multiple contacts with different domains of the 23S rRNA in the assembled 50S subunit and ribosome. Its function is as follows. Forms part of the polypeptide exit tunnel. The polypeptide is Large ribosomal subunit protein uL4 (Corynebacterium jeikeium (strain K411)).